The sequence spans 96 residues: Putative pterin-4-alpha-carbinolamine dehydratase (96 aa).

The protein belongs to the pterin-4-alpha-carbinolamine dehydratase family.

It carries out the reaction (4aS,6R)-4a-hydroxy-L-erythro-5,6,7,8-tetrahydrobiopterin = (6R)-L-erythro-6,7-dihydrobiopterin + H2O. The chain is Putative pterin-4-alpha-carbinolamine dehydratase from Novosphingobium aromaticivorans (strain ATCC 700278 / DSM 12444 / CCUG 56034 / CIP 105152 / NBRC 16084 / F199).